A 784-amino-acid polypeptide reads, in one-letter code: Cell wall protein Lmo0130 (784 aa).

A signal peptide spans 1-34 (MKVNKFFKKTTHVLLVAGLTIGLTAPFTGTTAQA). The disordered stretch occupies residues 690–761 (ATTPPDNGNG…NTSLPTTGDT (72 aa)). The segment covering 697-729 (GNGGTDNGNGNGNNGGTDGNGGTNNGNGSGTNG) has biased composition (gly residues). Over residues 730–759 (GTTTTEDPTTTTSNTSTTGTSSNTSLPTTG) the composition is skewed to low complexity. The short motif at 755-759 (LPTTG) is the LPXTG sorting signal element. At Thr-758 the chain carries Pentaglycyl murein peptidoglycan amidated threonine. Residues 759–784 (GDTAGLATVFGVILTTTALYVLRKRS) constitute a propeptide, removed by sortase A.

Its subcellular location is the secreted. The protein localises to the cell wall. The polypeptide is Cell wall protein Lmo0130 (Listeria monocytogenes serovar 1/2a (strain ATCC BAA-679 / EGD-e)).